We begin with the raw amino-acid sequence, 190 residues long: GTP cyclohydrolase 1 (190 aa).

Residues Cys75, His78, and Cys146 each coordinate Zn(2+).

It belongs to the GTP cyclohydrolase I family. Homomer.

The catalysed reaction is GTP + H2O = 7,8-dihydroneopterin 3'-triphosphate + formate + H(+). Its pathway is cofactor biosynthesis; 7,8-dihydroneopterin triphosphate biosynthesis; 7,8-dihydroneopterin triphosphate from GTP: step 1/1. This chain is GTP cyclohydrolase 1, found in Campylobacter jejuni subsp. jejuni serotype O:6 (strain 81116 / NCTC 11828).